Here is a 445-residue protein sequence, read N- to C-terminus: Phosphoglucosamine mutase (445 aa).

Residue S99 is the Phosphoserine intermediate of the active site. The Mg(2+) site is built by S99, D242, D244, and D246. Phosphoserine is present on S99.

The protein belongs to the phosphohexose mutase family. The cofactor is Mg(2+). Activated by phosphorylation.

The enzyme catalyses alpha-D-glucosamine 1-phosphate = D-glucosamine 6-phosphate. In terms of biological role, catalyzes the conversion of glucosamine-6-phosphate to glucosamine-1-phosphate. This Sulfurovum sp. (strain NBC37-1) protein is Phosphoglucosamine mutase.